Here is a 123-residue protein sequence, read N- to C-terminus: Large ribosomal subunit protein bL12 (123 aa).

This sequence belongs to the bacterial ribosomal protein bL12 family. As to quaternary structure, homodimer. Part of the ribosomal stalk of the 50S ribosomal subunit. Forms a multimeric L10(L12)X complex, where L10 forms an elongated spine to which 2 to 4 L12 dimers bind in a sequential fashion. Binds GTP-bound translation factors.

In terms of biological role, forms part of the ribosomal stalk which helps the ribosome interact with GTP-bound translation factors. Is thus essential for accurate translation. This Mycoplasmopsis synoviae (strain 53) (Mycoplasma synoviae) protein is Large ribosomal subunit protein bL12.